The primary structure comprises 68 residues: Large ribosomal subunit protein bL31 (68 aa).

Zn(2+)-binding residues include cysteine 16, cysteine 18, cysteine 36, and cysteine 39.

The protein belongs to the bacterial ribosomal protein bL31 family. Type A subfamily. Part of the 50S ribosomal subunit. Zn(2+) is required as a cofactor.

In terms of biological role, binds the 23S rRNA. In Dictyoglomus turgidum (strain DSM 6724 / Z-1310), this protein is Large ribosomal subunit protein bL31.